The chain runs to 778 residues: Transcription factor kayak (778 aa).

Low complexity-rich tracts occupy residues 24-54 and 77-98; these read AQQL…HTQQ and QYYQ…QRQL. Disordered regions lie at residues 24 to 57, 76 to 130, 183 to 223, 294 to 320, 356 to 414, and 427 to 478; these read AQQL…QNGL, NQYY…HQLR, QPTA…TTNG, APLV…VLAS, ASVM…GTGG, and RNTN…RKRR. Residues 99–108 are compositionally biased toward polar residues; it reads PTQQPAASYE. Low complexity-rich tracts occupy residues 109 to 130 and 183 to 222; these read QQQQ…HQLR and QPTA…TTTN. Positions 382–402 are enriched in low complexity; sequence ISDTSSGATDSTSYQNGHMMG. A compositionally biased stretch (gly residues) spans 403–414; it reads NSGGGNGGGTGG. Residues 427–436 are compositionally biased toward polar residues; it reads RNTNTSNSAT. Positions 457-520 constitute a bZIP domain; the sequence is EEKRRIRRER…NQLEYFLQAH (64 aa). The tract at residues 459–478 is basic motif; that stretch reads KRRIRRERNKQAAARCRKRR. Residues 485–513 form a leucine-zipper region; the sequence is LTEEVELLEKRGENLKKEMELLNETKNQL. The span at 550-571 shows a compositional bias: low complexity; it reads GSCGSGSSHHNNNSNSNDSSSG. Disordered regions lie at residues 550-594 and 756-778; these read GSCG…DLKP and TSQN…LVSL. Positions 579-589 are enriched in polar residues; the sequence is TLNSTGRSNSP. Residue Ser588 is modified to Phosphoserine.

This sequence belongs to the bZIP family. Fos subfamily. In terms of assembly, homodimer. Heterodimer with Jra. The kay-Jra heterodimer binds more stably to the AP-1 site than either of the two proteins alone.

The protein resides in the nucleus. Functionally, developmentally regulated transcription factor AP-1 binds and recognizes the enhancer DNA sequence: 5'-TGA[CG]TCA-3'. May play a role in the function or determination of a particular subset of cells in the developing embryo. It is able to carry out its function either independently of or in conjunction with Jra. The polypeptide is Transcription factor kayak (Drosophila pseudoobscura pseudoobscura (Fruit fly)).